The chain runs to 164 residues: UPF0114 protein YqhA (164 aa).

Transmembrane regions (helical) follow at residues 15-35 (LLAP…LKFF), 53-73 (LILV…LVMV), and 136-156 (LMWY…MGYL).

It belongs to the UPF0114 family.

It localises to the cell membrane. The sequence is that of UPF0114 protein YqhA from Escherichia coli O139:H28 (strain E24377A / ETEC).